The following is a 418-amino-acid chain: Serine hydroxymethyltransferase (418 aa).

(6S)-5,6,7,8-tetrahydrofolate contacts are provided by residues Leu121 and 125 to 127; that span reads GHL. N6-(pyridoxal phosphate)lysine is present on Lys230. 355-357 serves as a coordination point for (6S)-5,6,7,8-tetrahydrofolate; sequence SPF.

It belongs to the SHMT family. In terms of assembly, homodimer. Pyridoxal 5'-phosphate serves as cofactor.

Its subcellular location is the cytoplasm. It catalyses the reaction (6R)-5,10-methylene-5,6,7,8-tetrahydrofolate + glycine + H2O = (6S)-5,6,7,8-tetrahydrofolate + L-serine. The protein operates within one-carbon metabolism; tetrahydrofolate interconversion. It participates in amino-acid biosynthesis; glycine biosynthesis; glycine from L-serine: step 1/1. Functionally, catalyzes the reversible interconversion of serine and glycine with tetrahydrofolate (THF) serving as the one-carbon carrier. This reaction serves as the major source of one-carbon groups required for the biosynthesis of purines, thymidylate, methionine, and other important biomolecules. Also exhibits THF-independent aldolase activity toward beta-hydroxyamino acids, producing glycine and aldehydes, via a retro-aldol mechanism. The polypeptide is Serine hydroxymethyltransferase (Streptococcus agalactiae serotype V (strain ATCC BAA-611 / 2603 V/R)).